The sequence spans 502 residues: MAAAAVTGQRPETAAAEEASRPQWAPPDHCQAQAAAGLGDGEDAPVRPLCKPRGICSRAYFLVLMVFVHLYLGNVLALLLFVHYSNGDESSDPGPQHRAQGPGPEPTLGPLTRLEGIKVGHERKVQLVTDRDHFIRTLSLKPLLFEIPGFLTDEECRLIIHLAQMKGLQRSQILPTEEYEEAMSTMQVSQLDLFRLLDQNRDGHLQLREVLAQTRLGNGWWMTPESIQEMYAAIKADPDGDGVLSLQEFSNMDLRDFHKYMRSHKAESSELVRNSHHTWLYQGEGAHHIMRAIRQRVLRLTRLSPEIVELSEPLQVVRYGEGGHYHAHVDSGPVYPETICSHTKLVANESVPFETSCRYMTVLFYLNNVTGGGETVFPVADNRTYDEMSLIQDDVDLRDTRRHCDKGNLRVKPQQGTAVFWYNYLPDGQGWVGDVDDYSLHGGCLVTRGTKWIANNWINVDPSRARQALFQQEMARLAREGGTDSQPEWALDRAYRDARVEL.

Residues 1–29 form a disordered region; sequence MAAAAVTGQRPETAAAEEASRPQWAPPDH. Over 1–60 the chain is Cytoplasmic; it reads MAAAAVTGQRPETAAAEEASRPQWAPPDHCQAQAAAGLGDGEDAPVRPLCKPRGICSRAY. Residues 61-81 traverse the membrane as a helical; Signal-anchor for type II membrane protein segment; sequence FLVLMVFVHLYLGNVLALLLF. At 82-502 the chain is on the lumenal side; it reads VHYSNGDESS…RAYRDARVEL (421 aa). Residues 89-111 form a disordered region; the sequence is ESSDPGPQHRAQGPGPEPTLGPL. 2 EF-hand domains span residues 185–220 and 224–259; these read TMQV…GNGW and PESI…DFHK. Ca(2+) contacts are provided by Asp-198, Asn-200, Asp-202, His-204, Glu-209, Asp-237, Asp-239, Asp-241, and Glu-248. Positions 310-460 constitute a Fe2OG dioxygenase domain; the sequence is LSEPLQVVRY…KWIANNWINV (151 aa). Fe cation is bound by residues His-328 and Asp-330. 2 N-linked (GlcNAc...) asparagine glycosylation sites follow: Asn-348 and Asn-368. Glu-374 serves as a coordination point for Fe cation. N-linked (GlcNAc...) asparagine glycosylation is present at Asn-382. A 2-oxoglutarate-binding site is contributed by Lys-451.

In terms of assembly, homodimer. Requires Fe(2+) as cofactor. L-ascorbate is required as a cofactor. In terms of processing, glycosylated. As to expression, widely expressed with highest levels in adult pancreas, heart, skeletal muscle, brain, placenta, kidney and adrenal gland. Expressed at lower levels in epiphyseal cartilage and in fibroblasts.

Its subcellular location is the endoplasmic reticulum membrane. It catalyses the reaction L-prolyl-[hypoxia-inducible factor alpha subunit] + 2-oxoglutarate + O2 = trans-4-hydroxy-L-prolyl-[hypoxia-inducible factor alpha subunit] + succinate + CO2. Catalyzes the post-translational formation of 4-hydroxyproline in hypoxia-inducible factor (HIF) alpha proteins. Hydroxylates HIF1A at 'Pro-402' and 'Pro-564'. May function as a cellular oxygen sensor and, under normoxic conditions, may target HIF through the hydroxylation for proteasomal degradation via the von Hippel-Lindau ubiquitination complex. This Homo sapiens (Human) protein is Transmembrane prolyl 4-hydroxylase (P4HTM).